A 397-amino-acid chain; its full sequence is Elongation factor Tu (397 aa).

Residues 10–206 form the tr-type G domain; it reads KPHVNIGTIG…AVDEAIPTPP (197 aa). The interval 19–26 is G1; sequence GHIDHGKT. GTP is bound at residue 19–26; that stretch reads GHIDHGKT. Thr-26 contacts Mg(2+). The tract at residues 62–66 is G2; it reads GITIS. The interval 83 to 86 is G3; sequence DCPG. Residues 83–87 and 138–141 contribute to the GTP site; these read DCPGH and NKAD. The interval 138–141 is G4; sequence NKAD. The interval 176–178 is G5; that stretch reads SAL.

It belongs to the TRAFAC class translation factor GTPase superfamily. Classic translation factor GTPase family. EF-Tu/EF-1A subfamily. In terms of assembly, monomer.

Its subcellular location is the cytoplasm. The catalysed reaction is GTP + H2O = GDP + phosphate + H(+). Its function is as follows. GTP hydrolase that promotes the GTP-dependent binding of aminoacyl-tRNA to the A-site of ribosomes during protein biosynthesis. In Kitasatospora aureofaciens (Streptomyces aureofaciens), this protein is Elongation factor Tu.